The following is a 260-amino-acid chain: Methyl-coenzyme M reductase I subunit gamma (260 aa).

Arg-123 is a coenzyme M binding site.

The protein belongs to the methyl-coenzyme M reductase gamma subunit family. In terms of assembly, MCR is a hexamer of two alpha, two beta, and two gamma chains, forming a dimer of heterotrimers. Requires coenzyme F430 as cofactor.

It localises to the cytoplasm. The catalysed reaction is coenzyme B + methyl-coenzyme M = methane + coenzyme M-coenzyme B heterodisulfide. It functions in the pathway one-carbon metabolism; methyl-coenzyme M reduction; methane from methyl-coenzyme M: step 1/1. Its function is as follows. Component of the methyl-coenzyme M reductase (MCR) I that catalyzes the reductive cleavage of methyl-coenzyme M (CoM-S-CH3 or 2-(methylthio)ethanesulfonate) using coenzyme B (CoB or 7-mercaptoheptanoylthreonine phosphate) as reductant which results in the production of methane and the mixed heterodisulfide of CoB and CoM (CoM-S-S-CoB). This is the final step in methanogenesis. The chain is Methyl-coenzyme M reductase I subunit gamma (mcrG) from Methanocaldococcus jannaschii (strain ATCC 43067 / DSM 2661 / JAL-1 / JCM 10045 / NBRC 100440) (Methanococcus jannaschii).